A 172-amino-acid polypeptide reads, in one-letter code: MFSRAARSLVMRTGLRTRGTGTHSPGDAAGSQRRMTPYVDCYAQRSYPMPDEPFCTELSEEQRALKEKEKGSWTQLSQAEKVALYRLQFHETFAEMNHRSNEWKTVMGCVFFFIGFTALVIWWQRVYVFPKKVVTLTEERKAQQLQRLLDMKSNPIQGLAAHWDYEKKEWKK.

The N-terminal 34 residues, 1–34 (MFSRAARSLVMRTGLRTRGTGTHSPGDAAGSQRR), are a transit peptide targeting the mitochondrion. Residues 13–22 (TGLRTRGTGT) show a composition bias toward low complexity. Residues 13–32 (TGLRTRGTGTHSPGDAAGSQ) are disordered. At 35 to 101 (MTPYVDCYAQ…TFAEMNHRSN (67 aa)) the chain is on the mitochondrial matrix side. The helical transmembrane segment at 102–127 (EWKTVMGCVFFFIGFTALVIWWQRVY) threads the bilayer. Residues 128–172 (VFPKKVVTLTEERKAQQLQRLLDMKSNPIQGLAAHWDYEKKEWKK) are Mitochondrial intermembrane-facing.

The protein belongs to the cytochrome c oxidase IV family. As to quaternary structure, component of the cytochrome c oxidase (complex IV, CIV), a multisubunit enzyme composed of 14 subunits. The complex is composed of a catalytic core of 3 subunits MT-CO1, MT-CO2 and MT-CO3, encoded in the mitochondrial DNA, and 11 supernumerary subunits COX4I, COX5A, COX5B, COX6A, COX6B, COX6C, COX7A, COX7B, COX7C, COX8 and NDUFA4, which are encoded in the nuclear genome. The complex exists as a monomer or a dimer and forms supercomplexes (SCs) in the inner mitochondrial membrane with NADH-ubiquinone oxidoreductase (complex I, CI) and ubiquinol-cytochrome c oxidoreductase (cytochrome b-c1 complex, complex III, CIII), resulting in different assemblies (supercomplex SCI(1)III(2)IV(1) and megacomplex MCI(2)III(2)IV(2)).

The protein resides in the mitochondrion inner membrane. It functions in the pathway energy metabolism; oxidative phosphorylation. Functionally, component of the cytochrome c oxidase, the last enzyme in the mitochondrial electron transport chain which drives oxidative phosphorylation. The respiratory chain contains 3 multisubunit complexes succinate dehydrogenase (complex II, CII), ubiquinol-cytochrome c oxidoreductase (cytochrome b-c1 complex, complex III, CIII) and cytochrome c oxidase (complex IV, CIV), that cooperate to transfer electrons derived from NADH and succinate to molecular oxygen, creating an electrochemical gradient over the inner membrane that drives transmembrane transport and the ATP synthase. Cytochrome c oxidase is the component of the respiratory chain that catalyzes the reduction of oxygen to water. Electrons originating from reduced cytochrome c in the intermembrane space (IMS) are transferred via the dinuclear copper A center (CU(A)) of subunit 2 and heme A of subunit 1 to the active site in subunit 1, a binuclear center (BNC) formed by heme A3 and copper B (CU(B)). The BNC reduces molecular oxygen to 2 water molecules using 4 electrons from cytochrome c in the IMS and 4 protons from the mitochondrial matrix. This is Cytochrome c oxidase subunit 4 isoform 2, mitochondrial (Cox4i2) from Mus musculus (Mouse).